Consider the following 594-residue polypeptide: UV-stimulated scaffold protein A homolog (594 aa).

The tract at residues 24-170 (RKNLNRFIRE…VTLKKTKFVD (147 aa)) is VHS-like. The stretch at 170 to 198 (DYENGAKKIEAERKRKKILEERKMKMIEN) forms a coiled coil. The UVSSA-type zinc-finger motif lies at 466-493 (RKVCLAKMKSGKLCPRKDYYTCPLHGKI). 4 residues coordinate Zn(2+): cysteine 469, cysteine 479, cysteine 487, and histidine 490. A coiled-coil region spans residues 503–540 (INEEDRLEENYRKEQNHLKEADKIRQMIEKEYESKTKR). The interval 533-558 (EYESKTKRRKKHDVDTTASEDVRNRL) is disordered. Residues 544–558 (HDVDTTASEDVRNRL) show a composition bias toward basic and acidic residues.

Belongs to the UVSSA family.

The protein resides in the chromosome. Factor involved in transcription-coupled nucleotide excision repair (TC-NER) in response to UV damage. TC-NER allows RNA polymerase II-blocking lesions to be rapidly removed from the transcribed strand of active genes. This is UV-stimulated scaffold protein A homolog from Caenorhabditis elegans.